The primary structure comprises 261 residues: Small ribosomal subunit protein eS1A (261 aa).

Over residues 1-18 (MTLGKNKRISKGGKRGKK) the composition is skewed to basic residues. The tract at residues 1–23 (MTLGKNKRISKGGKRGKKKTQET) is disordered.

It belongs to the eukaryotic ribosomal protein eS1 family. In terms of assembly, component of the small ribosomal subunit. Mature ribosomes consist of a small (40S) and a large (60S) subunit. The 40S subunit contains about 33 different proteins and 1 molecule of RNA (18S). The 60S subunit contains about 49 different proteins and 3 molecules of RNA (25S, 5.8S and 5S).

Its subcellular location is the cytoplasm. This chain is Small ribosomal subunit protein eS1A, found in Trypanosoma cruzi (strain CL Brener).